The chain runs to 426 residues: MASIVAVSAREILDSRGNPTVEVDVVLETGAAGRAAVPSGASTGEREAVELRDGDPARYGGKGVLNAVNNVNTEIAEALEDMDATDQIAVDRALLDLDGTENKGRLGANAMLGVSMAVARAAAFEVGLPLYRYLGGPMARTLPVPMMNILNGGAHATNTVDFQEFMIIPVGADSFADGLRMGTQVFHQLKKVLVSRKLSTGVGDEGGFAPNLASDEEALKVIIEAIEAAGFRPGQDIALALDVAASELFQNGQYHFKKSGAPSRSPKDMAEMYAGWLEQYPIVSIEDGMSENDWDGWKLLTEKIGDRCQLVGDDLFCTNSEILAKGIENDVANAILIKVNQIGTLTETFEAIELARSAGYNSVISHRSGETEDTFIADLAVATQAGQIKTGAPSRSDRVAKYNQLLRIEEQLEGYAEYPGGAIFGI.

Gln-163 lines the (2R)-2-phosphoglycerate pocket. Glu-205 serves as the catalytic Proton donor. Residues Asp-242, Glu-286, and Asp-313 each contribute to the Mg(2+) site. (2R)-2-phosphoglycerate is bound by residues Lys-338, Arg-367, Ser-368, and Lys-389. The active-site Proton acceptor is Lys-338.

It belongs to the enolase family. Requires Mg(2+) as cofactor.

Its subcellular location is the cytoplasm. The protein localises to the secreted. It localises to the cell surface. It catalyses the reaction (2R)-2-phosphoglycerate = phosphoenolpyruvate + H2O. It functions in the pathway carbohydrate degradation; glycolysis; pyruvate from D-glyceraldehyde 3-phosphate: step 4/5. Catalyzes the reversible conversion of 2-phosphoglycerate (2-PG) into phosphoenolpyruvate (PEP). It is essential for the degradation of carbohydrates via glycolysis. In Gemmatimonas aurantiaca (strain DSM 14586 / JCM 11422 / NBRC 100505 / T-27), this protein is Enolase.